The following is a 288-amino-acid chain: Homeobox protein Hox-B4a (288 aa).

The disordered stretch occupies residues 10 to 136 (SNYVDPKFPP…ASSPASTRKD (127 aa)). The span at 118-132 (CGQTPHSQGASSPAS) shows a compositional bias: polar residues. Residues 139 to 144 (VYPWMK) carry the Antp-type hexapeptide motif. The homeobox DNA-binding region spans 160-219 (PKRSRTAYTRQQVLELEKEFHYNRYLTRRRRVEIAHTLCLSERQIKIWFQNRRMKWKKDH).

This sequence belongs to the Antp homeobox family. Deformed subfamily.

It is found in the nucleus. Sequence-specific transcription factor which is part of a developmental regulatory system that provides cells with specific positional identities on the anterior-posterior axis. This Takifugu rubripes (Japanese pufferfish) protein is Homeobox protein Hox-B4a (hoxb4a).